Here is a 273-residue protein sequence, read N- to C-terminus: Large ribosomal subunit protein uL2 (273 aa).

The segment at R221–T263 is disordered. Positions K253 to T263 are enriched in basic residues.

The protein belongs to the universal ribosomal protein uL2 family. As to quaternary structure, part of the 50S ribosomal subunit. Forms a bridge to the 30S subunit in the 70S ribosome.

One of the primary rRNA binding proteins. Required for association of the 30S and 50S subunits to form the 70S ribosome, for tRNA binding and peptide bond formation. It has been suggested to have peptidyltransferase activity; this is somewhat controversial. Makes several contacts with the 16S rRNA in the 70S ribosome. The chain is Large ribosomal subunit protein uL2 from Actinobacillus succinogenes (strain ATCC 55618 / DSM 22257 / CCUG 43843 / 130Z).